The primary structure comprises 94 residues: Co-chaperonin GroES (94 aa).

It belongs to the GroES chaperonin family. In terms of assembly, heptamer of 7 subunits arranged in a ring. Interacts with the chaperonin GroEL.

The protein localises to the cytoplasm. Together with the chaperonin GroEL, plays an essential role in assisting protein folding. The GroEL-GroES system forms a nano-cage that allows encapsulation of the non-native substrate proteins and provides a physical environment optimized to promote and accelerate protein folding. GroES binds to the apical surface of the GroEL ring, thereby capping the opening of the GroEL channel. This chain is Co-chaperonin GroES, found in Thermoanaerobacter pseudethanolicus (strain ATCC 33223 / 39E) (Clostridium thermohydrosulfuricum).